The chain runs to 197 residues: Recombination protein RecR (197 aa).

Residues 57–72 (CSVCFGITEDDPCRFC) form a C4-type zinc finger. One can recognise a Toprim domain in the interval 79–174 (GAICVVEEPQ…RVTRLAHGIP (96 aa)).

The protein belongs to the RecR family.

Functionally, may play a role in DNA repair. It seems to be involved in an RecBC-independent recombinational process of DNA repair. It may act with RecF and RecO. The chain is Recombination protein RecR from Geobacter sulfurreducens (strain ATCC 51573 / DSM 12127 / PCA).